The following is a 437-amino-acid chain: GTPase Era, mitochondrial (437 aa).

The N-terminal 20 residues, 1 to 20 (MAAPRRYCAGLVRALLGARQ), are a transit peptide targeting the mitochondrion. Residues 112–330 (RVLRVVLLGA…QYLLTQAQPG (219 aa)) enclose the Era-type G domain. A G1 region spans residues 120 to 127 (GAPNAGKS). 120–127 (GAPNAGKS) is a GTP binding site. Residues 146–150 (HTTRC) are G2. The interval 167–170 (DTPG) is G3. Residue 167–171 (DTPGI) participates in GTP binding. Ser-173 is subject to Phosphoserine. A GTP-binding site is contributed by 236–239 (NKVD). The tract at residues 236-239 (NKVD) is G4. A disordered region spans residues 270–292 (LRSRSSTHCPGPETEGPNAHSVR). The interval 308–310 (LSA) is G5. The region spanning 360 to 437 (LPEEVPYGVQ…LIRLSVKLLK (78 aa)) is the KH type-2 domain.

The protein belongs to the TRAFAC class TrmE-Era-EngA-EngB-Septin-like GTPase superfamily. Era GTPase family.

The protein resides in the mitochondrion matrix. Its subcellular location is the mitochondrion inner membrane. In terms of biological role, probable GTPase that plays a role in the mitochondrial ribosomal small subunit assembly. Specifically binds the 12S mitochondrial rRNA (12S mt-rRNA) to a 33 nucleotide section delineating the 3' terminal stem-loop region. May act as a chaperone that protects the 12S mt-rRNA on the 28S mitoribosomal subunit during ribosomal small subunit assembly. The sequence is that of GTPase Era, mitochondrial (Eral1) from Mus musculus (Mouse).